A 210-amino-acid polypeptide reads, in one-letter code: Large ribosomal subunit protein bL25 (210 aa).

The protein belongs to the bacterial ribosomal protein bL25 family. CTC subfamily. As to quaternary structure, part of the 50S ribosomal subunit; part of the 5S rRNA/L5/L18/L25 subcomplex. Contacts the 5S rRNA. Binds to the 5S rRNA independently of L5 and L18.

Functionally, this is one of the proteins that binds to the 5S RNA in the ribosome where it forms part of the central protuberance. This chain is Large ribosomal subunit protein bL25, found in Herminiimonas arsenicoxydans.